Here is a 620-residue protein sequence, read N- to C-terminus: Probable potassium transport system protein Kup 2 (620 aa).

12 helical membrane passes run 10-30 (LLVSAVGVVFGDIGTSPLYAL), 50-70 (VLSLVFWTVMLLVTVKYVIVI), 102-122 (MMLGVIAAALFYGDSMITPAI), 136-156 (PDLRPYVVPITAVVLTALFAI), 168-188 (FGPVMCLWFITLAVLGIVNVI), 211-231 (LMSFYALGSVVLAVTGGEALY), 246-266 (WFCLVLPALLLNYFGQGALLI), 284-304 (MVVPLVALATFAAVIASQAVI), 336-356 (IYVPFTNWTLYLAVMALVVGF), 368-388 (IAVTSTMMIDTILVSFVMALL), 393-413 (MALVITVVGTLLAVDIAFFSA), and 415-435 (IIKVAQGGWFPLFIGFISFTV).

Belongs to the HAK/KUP transporter (TC 2.A.72) family.

It localises to the cell inner membrane. The catalysed reaction is K(+)(in) + H(+)(in) = K(+)(out) + H(+)(out). In terms of biological role, transport of potassium into the cell. Likely operates as a K(+):H(+) symporter. This chain is Probable potassium transport system protein Kup 2, found in Rhodopseudomonas palustris (strain BisB5).